The sequence spans 415 residues: MDFLKNQDPAVYEIFEKELQRQTDHLEMIASENFTSPAVMEAMGSVFTNKYAEGYPGKRYYGGCEYADAIEELAIQRAKELFGCEFVNVQPHSGSQANQGVYLALLKPYDKILGMDLSHGGHLTHGAKVNASGKIYQSFFYGVNDEGWIDYDRVLDIAKIVKPKLIVCGASAYPRVIDFKKFREIADEVGALLMADIAHIAGLVAAGEHPSPFPYCDVVTTTTHKTLRGPRGGMIMTNDADIAKKINSAIFPGIQGGPLVHVIAAKAVGFGENLKPEWKEYAKQMRINASTLATVLMNRGYNVVSGGTDNHLVLVSFLDKDFSGKDADEALGRAGITVNKNTVPGETRSPFVTSGIRIGSPALTARGMKEAEFELIANKIADVLDNIHDVNLHEKIKEEMVALARKFVIYDRPTY.

(6S)-5,6,7,8-tetrahydrofolate contacts are provided by residues L117 and 121 to 123 (GHL). K225 carries the post-translational modification N6-(pyridoxal phosphate)lysine. Position 349–351 (349–351 (SPF)) interacts with (6S)-5,6,7,8-tetrahydrofolate.

It belongs to the SHMT family. In terms of assembly, homodimer. Pyridoxal 5'-phosphate is required as a cofactor.

It is found in the cytoplasm. The catalysed reaction is (6R)-5,10-methylene-5,6,7,8-tetrahydrofolate + glycine + H2O = (6S)-5,6,7,8-tetrahydrofolate + L-serine. It participates in one-carbon metabolism; tetrahydrofolate interconversion. The protein operates within amino-acid biosynthesis; glycine biosynthesis; glycine from L-serine: step 1/1. In terms of biological role, catalyzes the reversible interconversion of serine and glycine with tetrahydrofolate (THF) serving as the one-carbon carrier. This reaction serves as the major source of one-carbon groups required for the biosynthesis of purines, thymidylate, methionine, and other important biomolecules. Also exhibits THF-independent aldolase activity toward beta-hydroxyamino acids, producing glycine and aldehydes, via a retro-aldol mechanism. This chain is Serine hydroxymethyltransferase, found in Nitratiruptor sp. (strain SB155-2).